Reading from the N-terminus, the 407-residue chain is Probable tRNA sulfurtransferase (407 aa).

Residues 61-165 (NEITYRLSKI…LDAIYMYEEV (105 aa)) enclose the THUMP domain. ATP-binding positions include 183-184 (ML), 208-209 (HF), arginine 265, glycine 287, and glutamine 296.

It belongs to the ThiI family.

The protein resides in the cytoplasm. It catalyses the reaction [ThiI sulfur-carrier protein]-S-sulfanyl-L-cysteine + a uridine in tRNA + 2 reduced [2Fe-2S]-[ferredoxin] + ATP + H(+) = [ThiI sulfur-carrier protein]-L-cysteine + a 4-thiouridine in tRNA + 2 oxidized [2Fe-2S]-[ferredoxin] + AMP + diphosphate. The catalysed reaction is [ThiS sulfur-carrier protein]-C-terminal Gly-Gly-AMP + S-sulfanyl-L-cysteinyl-[cysteine desulfurase] + AH2 = [ThiS sulfur-carrier protein]-C-terminal-Gly-aminoethanethioate + L-cysteinyl-[cysteine desulfurase] + A + AMP + 2 H(+). Its pathway is cofactor biosynthesis; thiamine diphosphate biosynthesis. Functionally, catalyzes the ATP-dependent transfer of a sulfur to tRNA to produce 4-thiouridine in position 8 of tRNAs, which functions as a near-UV photosensor. Also catalyzes the transfer of sulfur to the sulfur carrier protein ThiS, forming ThiS-thiocarboxylate. This is a step in the synthesis of thiazole, in the thiamine biosynthesis pathway. The sulfur is donated as persulfide by IscS. The protein is Probable tRNA sulfurtransferase of Staphylococcus aureus (strain JH1).